The sequence spans 453 residues: Signal transduction histidine-protein kinase ArlS (453 aa).

A run of 2 helical transmembrane segments spans residues 14-34 (ITTL…IFFL) and 157-177 (FVAI…SYIF). The HAMP domain occupies 179-232 (TQLTKPLVTMSNKMIQIRRDGFQNKLELKTNYEETDNLIDTFNDMMYQIEESFN). In terms of domain architecture, Histidine kinase spans 240-453 (DASHELRTPL…QYTTFKIIFK (214 aa)). The residue at position 243 (His-243) is a Phosphohistidine; by autocatalysis.

In terms of processing, autophosphorylated.

Its subcellular location is the cell membrane. It carries out the reaction ATP + protein L-histidine = ADP + protein N-phospho-L-histidine.. In terms of biological role, member of the two-component regulatory system ArlS/ArlR. ArlS probably functions as a sensor protein kinase which is autophosphorylated at a histidine residue and transfers its phosphate group to ArlR. In Staphylococcus haemolyticus (strain JCSC1435), this protein is Signal transduction histidine-protein kinase ArlS (arlS).